A 469-amino-acid chain; its full sequence is UDP-N-acetylmuramate--L-alanine ligase (469 aa).

122 to 128 (GTHGKTT) provides a ligand contact to ATP.

Belongs to the MurCDEF family.

It is found in the cytoplasm. The catalysed reaction is UDP-N-acetyl-alpha-D-muramate + L-alanine + ATP = UDP-N-acetyl-alpha-D-muramoyl-L-alanine + ADP + phosphate + H(+). Its pathway is cell wall biogenesis; peptidoglycan biosynthesis. Its function is as follows. Cell wall formation. The polypeptide is UDP-N-acetylmuramate--L-alanine ligase (Legionella pneumophila (strain Paris)).